We begin with the raw amino-acid sequence, 574 residues long: Putative dehydratase IlvD1 (574 aa).

[4Fe-4S] cluster-binding residues include cysteine 124 and cysteine 197.

This sequence belongs to the IlvD/Edd family. The cofactor is [4Fe-4S] cluster.

Functionally, involved in the degradation of galactose via the DeLey-Doudoroff pathway. The sequence is that of Putative dehydratase IlvD1 (ilvD1) from Rhizobium meliloti (strain 1021) (Ensifer meliloti).